Here is a 243-residue protein sequence, read N- to C-terminus: Peptidase E (243 aa).

Residues serine 118, aspartate 133, and histidine 155 each act as charge relay system in the active site.

The protein belongs to the peptidase S51 family.

It is found in the cytoplasm. The catalysed reaction is Dipeptidase E catalyzes the hydrolysis of dipeptides Asp-|-Xaa. It does not act on peptides with N-terminal Glu, Asn or Gln, nor does it cleave isoaspartyl peptides.. Functionally, hydrolyzes dipeptides containing N-terminal aspartate residues. May play a role in allowing the cell to use peptide aspartate to spare carbon otherwise required for the synthesis of the aspartate family of amino acids. This Streptomyces coelicolor (strain ATCC BAA-471 / A3(2) / M145) protein is Peptidase E.